We begin with the raw amino-acid sequence, 395 residues long: Inner membrane protein YjgN (395 aa).

The Cytoplasmic portion of the chain corresponds to 1-24 (MNNVISSKDNHNHTLVFTGKGGKY). The chain crosses the membrane as a helical span at residues 25–45 (FVICLVNFLLTCITLGIYAPW). Topologically, residues 46–71 (AMVKCRRYIYTNMTLNNQPFAYKATG) are periplasmic. The chain crosses the membrane as a helical span at residues 72-92 (GALFISVLLVFIIYIVSLSLI). The Cytoplasmic segment spans residues 93-95 (EHG). The helical transmembrane segment at 96–116 (HPGLGFTLFGLLIAIIPFMAV) threads the bilayer. The Periplasmic portion of the chain corresponds to 117–146 (KGLQYQAMMTSLNGVHFGFQCSMRRAWWYM). A helical transmembrane segment spans residues 147-167 (FALPVLLMVALYIVLYIISLV). A topological domain (cytoplasmic) is located at residue Thr168. A helical transmembrane segment spans residues 169–189 (IAVGGLVFSIVFLGLLAIIGI). Residues 190–229 (GVINGITYSKWMTLFGNGANFGIHRFSIQVNVKTCIRGCV) lie on the Periplasmic side of the membrane. The helical transmembrane segment at 230 to 250 (LAMLTLFPFAVVIGYLIAPVF) threads the bilayer. Over 251 to 275 (TDMILLSMMGNAQAGGALILQYYGQ) the chain is Cytoplasmic. The chain crosses the membrane as a helical span at residues 276–296 (IMACYFLYFLAIIVVTSYLYV). Residues 297–327 (ALRNLFLNNLSLANDSIRFHSSVTAHGMLWR) are Periplasmic-facing. A helical membrane pass occupies residues 328–348 (LLVVFVISGVTLGLAYPWLKI). At 349 to 395 (WLVSWLAQNTQVQGDLDSLELTNDEKPLENSPLMWISRGIMPYFPFI) the chain is on the cytoplasmic side.

It is found in the cell inner membrane. The chain is Inner membrane protein YjgN (yjgN) from Salmonella typhimurium (strain LT2 / SGSC1412 / ATCC 700720).